Here is a 348-residue protein sequence, read N- to C-terminus: Uroporphyrinogen decarboxylase (348 aa).

Substrate contacts are provided by residues 27–31 (RQAGR), phenylalanine 46, aspartate 76, tyrosine 152, serine 207, and histidine 320.

The protein belongs to the uroporphyrinogen decarboxylase family. Homodimer.

It is found in the cytoplasm. The catalysed reaction is uroporphyrinogen III + 4 H(+) = coproporphyrinogen III + 4 CO2. Its pathway is porphyrin-containing compound metabolism; protoporphyrin-IX biosynthesis; coproporphyrinogen-III from 5-aminolevulinate: step 4/4. Catalyzes the decarboxylation of four acetate groups of uroporphyrinogen-III to yield coproporphyrinogen-III. This is Uroporphyrinogen decarboxylase from Bacillus cereus (strain AH820).